The following is a 224-amino-acid chain: DNA repair and recombination protein RadB (224 aa).

Belongs to the eukaryotic RecA-like protein family. RadB subfamily.

Its function is as follows. Involved in DNA repair and in homologous recombination. May regulate the cleavage reactions of the branch-structured DNA. Has a very weak ATPase activity that is not stimulated by DNA. Binds DNA but does not promote DNA strands exchange. The polypeptide is DNA repair and recombination protein RadB (Methanoculleus marisnigri (strain ATCC 35101 / DSM 1498 / JR1)).